Here is a 175-residue protein sequence, read N- to C-terminus: Cuticle protein 16.5, isoform A (175 aa).

Tandem repeats lie at residues 17–20 (AAPA), 25–28 (AAPA), 31–34 (AAPA), 38–41 (AAPA), 44–47 (AAPA), 51–54 (AAPA), 57–60 (AAPA), 64–67 (AAPA), 70–73 (AAPA), 77–80 (AAPA), 83–86 (AAPA), 91–94 (AAPA), 99–102 (AAPA), 106–109 (AAPA), 134–137 (AAPA), 144–147 (AAPA), 151–154 (AAPA), 158–161 (AAPA), and 165–168 (AAPA).

In terms of biological role, component of the cuticle of migratory locust which contains more than 100 different structural proteins. The polypeptide is Cuticle protein 16.5, isoform A (Locusta migratoria (Migratory locust)).